Reading from the N-terminus, the 773-residue chain is MKLLEIYDKQLVEQEEGGFRAILTRYLNKWIFTVDHKLIGTMYITFSIFAGIIGTLLSLVIPMELSTGNMLEGDSQQYNVIVTAHGLIMIFFVVMYCSMPAMLGGFANWFLPIMVGAPDVAFPRLNNISLWLIVVSFGLLLTSSCVGIGAGTGWTVYPPLSMMEYHPGHAVDVGILSLHIAGASSLVGAINFLTTVFNMKIAGLSWPKVSLFVWSVVITAVLLVLSLPVLAGGLTMLITDRNFETTFFDPIGGGDPILYQHLFHPEVYILILPGFGIISIIISRYSNKGIFGVKGMISAMSAIGFLGFLVWAYHHMYTVGLDVDTRAYFTAATMIIAIPTGIKIFSWLATLWGGVIKITTPMLFVIGFLVLFTIGGLTGVVLANGGLDISLHDTYYVVAHFHYVLSMGAIFAIFAGYYYYYAIMNSNRILGIVRYNEQLGRIHFWTMFIGVNVTFFPMHFLGLAGMPRRIGDYPDAYIGWNLIASYGSLITAFGLLFFFVNIFTPYFKKKALISKKFQRGAMILMGLDFSRDWQIGFQDPATPIMEGIIDLHNYIFFYLIVVAVFIGWVMGRILWRFAYKWSYPTIGDIEIFKNFTAYNQIIHGTVIEIVWTLIPTVILYLIAIPSFTLLYAMDEIINPTVTIKIIGHQWYWSYEYGDNSSNLVEFDSYMVYERDLNEGQLRLLEVDNSMIVPVKTHIRLIITSGDVLHSWAVPSFGIKVDAVPGRLNQIGLYVKREGTFYGQCSELCGVDHGFMPIKVEAVKVQEYLGRLYK.

Residues 1–491 (MKLLEIYDKQ…LIASYGSLIT (491 aa)) form a COX1 region. The helical transmembrane segment at 41–61 (TMYITFSIFAGIIGTLLSLVI) threads the bilayer. Glutamate 64 lines the Ca(2+) pocket. Histidine 85 provides a ligand contact to Fe(II)-heme a. The next 6 membrane-spanning stretches (helical) occupy residues 87–111 (LIMIFFVVMYCSMPAMLGGFANWFL), 130–150 (LWLIVVSFGLLLTSSCVGIGA), 173–193 (VGILSLHIAGASSLVGAINFL), 211–231 (LFVWSVVITAVLLVLSLPVLA), 262–278 (LFHPEVYILILPGFGII), and 290–310 (IFGVKGMISAMSAIGFLGFLV). Histidine 264 provides a ligand contact to Cu cation. The 1'-histidyl-3'-tyrosine (His-Tyr) cross-link spans 264–268 (HPEVY). Position 268 (tyrosine 268) interacts with O2. Cu cation contacts are provided by histidine 314 and histidine 315. A run of 2 helical transmembrane segments spans residues 335 to 355 (IIAIPTGIKIFSWLATLWGGV) and 362 to 382 (MLFVIGFLVLFTIGGLTGVVL). Positions 392 and 393 each coordinate Mg(2+). A run of 5 helical transmembrane segments spans residues 396-416 (YVVAHFHYVLSMGAIFAIFAG), 444-464 (FWTMFIGVNVTFFPMHFLGLA), 483-503 (IASYGSLITAFGLLFFFVNIF), 555-575 (IFFYLIVVAVFIGWVMGRILW), and 604-624 (GTVIEIVWTLIPTVILYLIAI). Histidine 400 serves as a coordination point for heme a3. Histidine 402 lines the Fe(II)-heme a pocket. Residues 492 to 773 (AFGLLFFFVN…VQEYLGRLYK (282 aa)) are COX2. Cu cation-binding residues include histidine 709, cysteine 744, cysteine 748, and histidine 752.

This sequence in the N-terminal section; belongs to the heme-copper respiratory oxidase family. The protein in the C-terminal section; belongs to the cytochrome c oxidase subunit 2 family. In terms of assembly, component of the cytochrome c oxidase (complex IV, CIV), a multisubunit enzyme composed of a catalytic core of 3 subunits and several supernumerary subunits. The complex exists as a monomer or a dimer and forms supercomplexes (SCs) in the inner mitochondrial membrane with ubiquinol-cytochrome c oxidoreductase (cytochrome b-c1 complex, complex III, CIII). Requires heme as cofactor. Cu cation is required as a cofactor.

It is found in the mitochondrion inner membrane. It catalyses the reaction 4 Fe(II)-[cytochrome c] + O2 + 8 H(+)(in) = 4 Fe(III)-[cytochrome c] + 2 H2O + 4 H(+)(out). It functions in the pathway energy metabolism; oxidative phosphorylation. Its function is as follows. Component of the cytochrome c oxidase, the last enzyme in the mitochondrial electron transport chain which drives oxidative phosphorylation. The respiratory chain contains 3 multisubunit complexes succinate dehydrogenase (complex II, CII), ubiquinol-cytochrome c oxidoreductase (cytochrome b-c1 complex, complex III, CIII) and cytochrome c oxidase (complex IV, CIV), that cooperate to transfer electrons derived from NADH and succinate to molecular oxygen, creating an electrochemical gradient over the inner membrane that drives transmembrane transport and the ATP synthase. Cytochrome c oxidase is the component of the respiratory chain that catalyzes the reduction of oxygen to water. Electrons originating from reduced cytochrome c in the intermembrane space (IMS) are transferred via the dinuclear copper A center (CU(A)) of subunit 2 and heme A of subunit 1 to the active site in subunit 1, a binuclear center (BNC) formed by heme A3 and copper B (CU(B)). The BNC reduces molecular oxygen to 2 water molecules using 4 electrons from cytochrome c in the IMS and 4 protons from the mitochondrial matrix. The chain is Cytochrome c oxidase subunit 1+2 (cox1/2) from Dictyostelium citrinum (Slime mold).